We begin with the raw amino-acid sequence, 245 residues long: Uridylate kinase (245 aa).

An ATP-binding site is contributed by 18–21 (KLSG). G60 serves as a coordination point for UMP. Residues G61 and R65 each coordinate ATP. Residues D80 and 141–148 (TGNPFFTT) each bind UMP. ATP contacts are provided by T168, Y174, and D177.

This sequence belongs to the UMP kinase family. Homohexamer.

The protein resides in the cytoplasm. It carries out the reaction UMP + ATP = UDP + ADP. It participates in pyrimidine metabolism; CTP biosynthesis via de novo pathway; UDP from UMP (UMPK route): step 1/1. Inhibited by UTP. Its function is as follows. Catalyzes the reversible phosphorylation of UMP to UDP. The polypeptide is Uridylate kinase (Pseudomonas paraeruginosa (strain DSM 24068 / PA7) (Pseudomonas aeruginosa (strain PA7))).